The chain runs to 1179 residues: MGLQFILGDATTDHAGTMATMVQANLQADSQNQIFYLVPNHIKFEAEVDLLKRLRAQAASVNGVYAQNRVQVLSFSRLAWYFLKNTALYQQPRLDRASNTMLVAKILGESKEELTIYAGEAHNTGFVTQLADQLSELVTGRITAEDLNTTVAALTPGDRHRAKLRDLGIILDHYEAEIGPYATNASLLSGLQQVMRNQDLSHTFIYLNDFNVFSASETGLVETMIETAAEVTVSLVLNKPYPAAPPVAPNLFLPAGRLYHRLYQKAKTMKVPIRLDRFAKPRPLSEGMNHLADWWQTSTNLQPQAPAQTAQNKEVELAVATDPYHELRTVARQIYQAVRQGARYRDFLILARRLDPYAAVIPAIFEEFNIPQFTDLERPMKDHPLVVLIESLFAIQDHDYQYQDVMRLLHTELLLPENMDIAAFRDALDTTDNHLVRTGITGKKRWTQTDPWRYFQRNPNADDSQLDPEADKTAQINAIKTLVADTVPQLLRQWQTAKTGREAAASLYQWLQTTGVIDQLNVWRQTANADGDLSRSQANEQAWDTFTQLLNDYATILGEADFNRDQFRELLAAGFASATYTQIPSTLDSVVISETGLVRLAKAKHVYVIGATNTAMPDVPNDSGVLNSEERQLLAAQLPDDRFLPEQGPTTTLGDPFINYLGFMAASEKLTLSYPMQNTQENSENQASPYFRQLAQALQLTPATWAPAGLGTSLKAVLGSPRAMLSDFVRAAGEAQHQKLPLSRSWQGVLASLKQTKLAPLAQKLAGSLTYQNNPGRLDPTLAVQLYGRDMNVSVSRLETYYRNQFEYFLKYGLLLQPRPEFELSPADTGSLFHAVLDQYLTQLRDAGQTLADVTAADVAAAVPPLVAAITKRPGYEILGSTHRMAYLTSRLSRLLIQVLTNMRQQQRRTGFRPMRTELQFGQIGDTRGLPGLSWPLPHGGRVNVRGKIDRLDVYRESDAQRFMVVDYKSTQHRFDDSDAYYGIALQMLTYVEAMANVPADPPFVPAGALYFHLQDPKFKFSTDLDLDIDRLKAFKYLGFLVAKDGADLAAVDKTISAETGGRSMMVPLGFKKDGAFNYNQSNILTPEDLSAYLLHNQALIIDAASRILAGDIALAPFQYGQESTVISNSDYQSIMLFDPATGFDHYNHVPKLKRKEVLGRVTTDPTQIPHHRQEDSQA.

Belongs to the helicase family. AddB/RexB type 2 subfamily. As to quaternary structure, heterodimer of AddA and RexB. Mg(2+) is required as a cofactor.

The heterodimer acts as both an ATP-dependent DNA helicase and an ATP-dependent, dual-direction single-stranded exonuclease. Recognizes the chi site generating a DNA molecule suitable for the initiation of homologous recombination. This subunit has 5' -&gt; 3' nuclease activity but not helicase activity. The protein is ATP-dependent helicase/deoxyribonuclease subunit B of Lacticaseibacillus casei (strain BL23) (Lactobacillus casei).